The primary structure comprises 381 residues: Cobalt-precorrin-5B C(1)-methyltransferase (381 aa).

The protein belongs to the CbiD family.

The enzyme catalyses Co-precorrin-5B + S-adenosyl-L-methionine = Co-precorrin-6A + S-adenosyl-L-homocysteine. Its pathway is cofactor biosynthesis; adenosylcobalamin biosynthesis; cob(II)yrinate a,c-diamide from sirohydrochlorin (anaerobic route): step 6/10. In terms of biological role, catalyzes the methylation of C-1 in cobalt-precorrin-5B to form cobalt-precorrin-6A. The polypeptide is Cobalt-precorrin-5B C(1)-methyltransferase (Methylococcus capsulatus (strain ATCC 33009 / NCIMB 11132 / Bath)).